The following is a 60-amino-acid chain: Large ribosomal subunit protein bL32 (60 aa).

The protein belongs to the bacterial ribosomal protein bL32 family.

In Petrotoga mobilis (strain DSM 10674 / SJ95), this protein is Large ribosomal subunit protein bL32.